We begin with the raw amino-acid sequence, 291 residues long: uncharacterized protein (291 aa).

Residues 5 to 196 form the PNPLA domain; sequence GVFSGGGVKG…LSNFPIWLFS (192 aa). The GXGXXG motif lies at 9 to 14; the sequence is GGGVKG. A helical transmembrane segment spans residues 34–50; the sequence is VAGTSAGAIIAAFIASG. The GXSXG signature appears at 36 to 40; sequence GTSAG. S38 serves as the catalytic Nucleophile. D183 acts as the Proton acceptor in catalysis. Positions 183–185 match the DGA/G motif; the sequence is DGG.

It localises to the cell membrane. Functionally, probable lipid hydrolase. This is an uncharacterized protein from Bacillus subtilis (strain 168).